A 498-amino-acid polypeptide reads, in one-letter code: Glycerol kinase (498 aa).

Residue Thr12 coordinates ADP. 3 residues coordinate ATP: Thr12, Thr13, and Ser14. Position 12 (Thr12) interacts with sn-glycerol 3-phosphate. Arg16 contacts ADP. The sn-glycerol 3-phosphate site is built by Arg82, Tyr134, and Asp243. Glycerol contacts are provided by Arg82, Tyr134, Asp243, and Gln244. Residues Thr265 and Gly308 each contribute to the ADP site. ATP-binding residues include Thr265, Gly308, Gln312, and Gly411. Gly411 is an ADP binding site.

Belongs to the FGGY kinase family.

The enzyme catalyses glycerol + ATP = sn-glycerol 3-phosphate + ADP + H(+). It participates in polyol metabolism; glycerol degradation via glycerol kinase pathway; sn-glycerol 3-phosphate from glycerol: step 1/1. With respect to regulation, inhibited by fructose 1,6-bisphosphate (FBP). Its function is as follows. Key enzyme in the regulation of glycerol uptake and metabolism. Catalyzes the phosphorylation of glycerol to yield sn-glycerol 3-phosphate. This chain is Glycerol kinase, found in Brucella suis (strain ATCC 23445 / NCTC 10510).